A 419-amino-acid polypeptide reads, in one-letter code: UDP-N-acetylglucosamine 1-carboxyvinyltransferase (419 aa).

22-23 (KN) contacts phosphoenolpyruvate. Arg-93 is a binding site for UDP-N-acetyl-alpha-D-glucosamine. Cys-117 (proton donor) is an active-site residue. At Cys-117 the chain carries 2-(S-cysteinyl)pyruvic acid O-phosphothioketal. UDP-N-acetyl-alpha-D-glucosamine contacts are provided by Asp-307 and Ile-329.

It belongs to the EPSP synthase family. MurA subfamily.

Its subcellular location is the cytoplasm. The enzyme catalyses phosphoenolpyruvate + UDP-N-acetyl-alpha-D-glucosamine = UDP-N-acetyl-3-O-(1-carboxyvinyl)-alpha-D-glucosamine + phosphate. It participates in cell wall biogenesis; peptidoglycan biosynthesis. Cell wall formation. Adds enolpyruvyl to UDP-N-acetylglucosamine. This is UDP-N-acetylglucosamine 1-carboxyvinyltransferase from Shewanella piezotolerans (strain WP3 / JCM 13877).